The following is a 319-amino-acid chain: CBBY-like protein (319 aa).

The N-terminal 65 residues, 1-65 (MATVKISLSL…YRSSRSVGVT (65 aa)), are a transit peptide targeting the chloroplast. The Nucleophile role is filled by aspartate 82. Mg(2+) is bound by residues aspartate 82 and aspartate 84. Aspartate 82 is a binding site for substrate. The active-site Proton donor is aspartate 84. Substrate-binding positions include glutamate 91, 125–129 (GGKER), 158–161 (HKQK), and 198–204 (STSNEKA). Aspartate 258 contributes to the Mg(2+) binding site.

It belongs to the HAD-like hydrolase superfamily. DOG/GPP family. It depends on Mg(2+) as a cofactor.

The protein localises to the plastid. The protein resides in the chloroplast. The enzyme catalyses D-xylulose 1,5-bisphosphate + H2O = D-xylulose 5-phosphate + phosphate. Its function is as follows. Highly selective xylulose-1,5-bisphosphate (XuBP) phosphatase. Also shows activity towards ribulose-1,5-bisphosphate (RuBP) and fructose-1,6-bisphosphate (FBP), but not towards fructose-6-phosphate (F6P) or ribulose-5-phosphate (Ru5P). Degrades xylulose-1,5-bisphosphate, a potent inhibitor of rubisco produced by the rubisco itself. The sequence is that of CBBY-like protein from Arabidopsis thaliana (Mouse-ear cress).